The primary structure comprises 224 residues: Uracil-DNA glycosylase (224 aa).

Aspartate 62 acts as the Proton acceptor in catalysis.

It belongs to the uracil-DNA glycosylase (UDG) superfamily. UNG family.

The protein resides in the cytoplasm. The enzyme catalyses Hydrolyzes single-stranded DNA or mismatched double-stranded DNA and polynucleotides, releasing free uracil.. Excises uracil residues from the DNA which can arise as a result of misincorporation of dUMP residues by DNA polymerase or due to deamination of cytosine. This chain is Uracil-DNA glycosylase, found in Aliivibrio fischeri (strain ATCC 700601 / ES114) (Vibrio fischeri).